Reading from the N-terminus, the 212-residue chain is Cell division protein SepF (212 aa).

Residues 32–104 (RYADPDTSYD…APLGSDAHRE (73 aa)) form a disordered region. Residues 64–73 (EAEEDGGDYG) are compositionally biased toward acidic residues.

The protein belongs to the SepF family. In terms of assembly, homodimer. Interacts with FtsZ.

The protein localises to the cytoplasm. Its function is as follows. Cell division protein that is part of the divisome complex and is recruited early to the Z-ring. Probably stimulates Z-ring formation, perhaps through the cross-linking of FtsZ protofilaments. Its function overlaps with FtsA. This is Cell division protein SepF from Saccharopolyspora erythraea (strain ATCC 11635 / DSM 40517 / JCM 4748 / NBRC 13426 / NCIMB 8594 / NRRL 2338).